The following is a 315-amino-acid chain: Methionyl-tRNA formyltransferase (315 aa).

113–116 (SLLP) contacts (6S)-5,6,7,8-tetrahydrofolate.

Belongs to the Fmt family.

It catalyses the reaction L-methionyl-tRNA(fMet) + (6R)-10-formyltetrahydrofolate = N-formyl-L-methionyl-tRNA(fMet) + (6S)-5,6,7,8-tetrahydrofolate + H(+). Attaches a formyl group to the free amino group of methionyl-tRNA(fMet). The formyl group appears to play a dual role in the initiator identity of N-formylmethionyl-tRNA by promoting its recognition by IF2 and preventing the misappropriation of this tRNA by the elongation apparatus. The polypeptide is Methionyl-tRNA formyltransferase (Yersinia pseudotuberculosis serotype O:1b (strain IP 31758)).